A 731-amino-acid chain; its full sequence is DNA ligase (731 aa).

NAD(+) contacts are provided by residues 47-51 (DAEYD), 96-97 (SI), and Glu-133. Lys-135 functions as the N6-AMP-lysine intermediate in the catalytic mechanism. Residues Arg-156, Glu-192, Lys-313, and Lys-337 each coordinate NAD(+). Cys-462, Cys-465, Cys-480, and Cys-486 together coordinate Zn(2+). The 87-residue stretch at 645–731 (AATLPLAGMT…RGTPPNAGGA (87 aa)) folds into the BRCT domain.

The protein belongs to the NAD-dependent DNA ligase family. LigA subfamily. Requires Mg(2+) as cofactor. It depends on Mn(2+) as a cofactor.

The enzyme catalyses NAD(+) + (deoxyribonucleotide)n-3'-hydroxyl + 5'-phospho-(deoxyribonucleotide)m = (deoxyribonucleotide)n+m + AMP + beta-nicotinamide D-nucleotide.. Functionally, DNA ligase that catalyzes the formation of phosphodiester linkages between 5'-phosphoryl and 3'-hydroxyl groups in double-stranded DNA using NAD as a coenzyme and as the energy source for the reaction. It is essential for DNA replication and repair of damaged DNA. The sequence is that of DNA ligase from Acidovorax sp. (strain JS42).